Here is a 210-residue protein sequence, read N- to C-terminus: Orotate phosphoribosyltransferase (210 aa).

5-phospho-alpha-D-ribose 1-diphosphate-binding positions include arginine 94, lysine 98, histidine 100, and 120-128; that span reads EDLISTGGS. Serine 124 provides a ligand contact to orotate.

Belongs to the purine/pyrimidine phosphoribosyltransferase family. PyrE subfamily. Homodimer. It depends on Mg(2+) as a cofactor.

It carries out the reaction orotidine 5'-phosphate + diphosphate = orotate + 5-phospho-alpha-D-ribose 1-diphosphate. The protein operates within pyrimidine metabolism; UMP biosynthesis via de novo pathway; UMP from orotate: step 1/2. Functionally, catalyzes the transfer of a ribosyl phosphate group from 5-phosphoribose 1-diphosphate to orotate, leading to the formation of orotidine monophosphate (OMP). This Bacillus cereus (strain B4264) protein is Orotate phosphoribosyltransferase.